Here is a 230-residue protein sequence, read N- to C-terminus: RING finger protein 141 (230 aa).

The RING-type zinc-finger motif lies at 154-191 (ECCICMDGRVDLILPCAHSFCQKCIDKWSDRHRSCPVC).

This Gallus gallus (Chicken) protein is RING finger protein 141 (RNF141).